Consider the following 98-residue polypeptide: mRNA interferase toxin MqsR (98 aa).

As to quaternary structure, might be a dimer. Also reported to be a monomer. Crystallizes as a heterotetramer with MqsA, MqsR-MqsA(2)-MqsR. Purifies as a possible heterohexamer of 2 MqsR dimers and 1 MqsA dimer. When the 2 dissociate the MsqR mRNA interferase becomes active.

In terms of biological role, toxic component of a type II toxin-antitoxin (TA) system. Plays a significant role in the control of biofilm formation and induction of persister cells in the presence of antibiotics. An mRNA interferase which has been reported to be translation-independent. It has also been reported to be translation-dependent. Cleavage has been reported to occur on either side of G in the sequence GCU. Also reported to cleave after C in GC(A/U) sequences. There are only 14 genes in E.coli W3110 (and probably also MG1655) that do not have a GCU sequence and thus are resistant to the mRNA interferase activity; among these is the gene for toxin GhoT. Overexpression of MqsR causes cessation of cell growth and inhibits cell proliferation via inhibition of translation as well as increasing persister cell formation; these effects are overcome by concomitant or subsequent expression of antitoxin MqsA. Cross-talk can occur between different TA systems. Ectopic expression of this toxin induces transcription of the relBEF TA system operon with specific cleavage of the relBEF mRNA produced. Regulates the expression of GhoT/GhoS, a type V TA system. Persistence depends on toxin GhoT activity, which MqsR controls at the post-transcriptional level by selectively degrading the antitoxin ghoS segment of the ghoST mRNA. Overexpression leads to a dramatic increase in tolerance to the antibiotic ofloxacin. This TA system mediates cell growth during bile acid deoxycholate stress by degrading mRNA for probable deoxycholate-binding protein YgiS; bile acid detergents such as deoxycholate are important for host defense against bacterial growth in the gall bladder and duodenum. Its function is as follows. Initially reported to act as a cotranscription factor with MqsA. Following further experiments, the MqsR-MqsA complex does not bind DNA and all reported data are actually due to a small fraction of free MqsA alone binding DNA. Addition of MqsR to a preformed MqsA-promoter DNA complex causes dissociation of the MqsA-DNA complex, probably causing derepression of MqsA-repressed transcripts. Does not bind DNA in the presence or absence of MqsA. The chain is mRNA interferase toxin MqsR from Escherichia coli (strain K12).